We begin with the raw amino-acid sequence, 739 residues long: Adenosylcobalamin-dependent ribonucleoside-triphosphate reductase (739 aa).

A disulfide bridge connects residues Cys-119 and Cys-419. The effector region-1 stretch occupies residues 147–158 (SMPFSFLFDELM). Residues 168–313 (ARSNISQIPR…ICNLIGKAVV (146 aa)) are effector region-2. Catalysis depends on residues Cys-408 and Glu-410. Positions 565-626 (FHYGAYLIQR…NPNFASAGTV (62 aa)) are adenosylcobalamin-binding-1. The interval 685–724 (LQQAPKEPIDKETYEKRSQEITGNVEEVFSQLNSDVKDLE) is adenosylcobalamin-binding-2.

The protein belongs to the class II ribonucleoside-triphosphate reductase family. As to quaternary structure, monomer. Adenosylcob(III)alamin serves as cofactor.

It carries out the reaction a 2'-deoxyribonucleoside 5'-triphosphate + [thioredoxin]-disulfide + H2O = a ribonucleoside 5'-triphosphate + [thioredoxin]-dithiol. Its activity is regulated as follows. Allosterically regulated by ATP and dNTP. The protein is Adenosylcobalamin-dependent ribonucleoside-triphosphate reductase (rtpR) of Lactobacillus leichmannii.